A 458-amino-acid polypeptide reads, in one-letter code: Ig mu chain C region secreted form (458 aa).

The tract at residues 1–106 (VSLSSPTLYP…SNRDLRVSFP (106 aa)) is CH1. A disulfide bridge links cysteine 28 with cysteine 90. N-linked (GlcNAc...) asparagine glycans are attached at residues asparagine 46 and asparagine 114. The CH2 stretch occupies residues 107-222 (VDSELPPNVS…VSMSSECSTT (116 aa)). Residues cysteine 137 and cysteine 200 are joined by a disulfide bond. N-linked (GlcNAc...) asparagine glycosylation is found at asparagine 212, asparagine 261, asparagine 277, and asparagine 284. The interval 223 to 327 (PSPGIQVFPI…PLKHTISKSR (105 aa)) is CH3. Intrachain disulfides connect cysteine 249–cysteine 308 and cysteine 356–cysteine 418. Positions 328 to 458 (EVAKHPPAVY…IMSDTASTCY (131 aa)) are CH4. Asparagine 445 carries N-linked (GlcNAc...) asparagine glycosylation.

It is found in the secreted. The protein is Ig mu chain C region secreted form of Oryctolagus cuniculus (Rabbit).